The chain runs to 330 residues: 1-aminocyclopropane-1-carboxylate oxidase 2 (330 aa).

One can recognise a Fe2OG dioxygenase domain in the interval Pro-153 to Pro-253. Fe cation-binding residues include His-177, Asp-179, and His-234.

Belongs to the iron/ascorbate-dependent oxidoreductase family. As to quaternary structure, monomer. The cofactor is Fe cation.

The enzyme catalyses 1-aminocyclopropane-1-carboxylate + L-ascorbate + O2 = ethene + L-dehydroascorbate + hydrogen cyanide + CO2 + 2 H2O. It participates in alkene biosynthesis; ethylene biosynthesis via S-adenosyl-L-methionine; ethylene from S-adenosyl-L-methionine: step 2/2. This chain is 1-aminocyclopropane-1-carboxylate oxidase 2 (ACO2), found in Malus domestica (Apple).